The following is a 473-amino-acid chain: Photosystem II CP43 reaction center protein (473 aa).

Positions 1–14 (MKTLYSPRRYYPVE) are excised as a propeptide. T15 carries the post-translational modification N-acetylthreonine. T15 carries the post-translational modification Phosphothreonine. A run of 5 helical transmembrane segments spans residues 69 to 93 (LFEV…PHLA), 134 to 155 (IIGP…KDKN), 178 to 200 (KAVW…RVIT), 255 to 275 (KPFA…LSYS), and 291 to 312 (WFNN…ASQA). A [CaMn4O5] cluster-binding site is contributed by E367. The helical transmembrane segment at 447 to 471 (RARAAAAGFEKGIERETEPVLFMSP) threads the bilayer.

Belongs to the PsbB/PsbC family. PsbC subfamily. In terms of assembly, PSII is composed of 1 copy each of membrane proteins PsbA, PsbB, PsbC, PsbD, PsbE, PsbF, PsbH, PsbI, PsbJ, PsbK, PsbL, PsbM, PsbT, PsbX, PsbY, PsbZ, Psb30/Ycf12, at least 3 peripheral proteins of the oxygen-evolving complex and a large number of cofactors. It forms dimeric complexes. Requires Binds multiple chlorophylls and provides some of the ligands for the Ca-4Mn-5O cluster of the oxygen-evolving complex. It may also provide a ligand for a Cl- that is required for oxygen evolution. PSII binds additional chlorophylls, carotenoids and specific lipids. as cofactor.

The protein resides in the plastid. Its subcellular location is the chloroplast thylakoid membrane. In terms of biological role, one of the components of the core complex of photosystem II (PSII). It binds chlorophyll and helps catalyze the primary light-induced photochemical processes of PSII. PSII is a light-driven water:plastoquinone oxidoreductase, using light energy to abstract electrons from H(2)O, generating O(2) and a proton gradient subsequently used for ATP formation. The polypeptide is Photosystem II CP43 reaction center protein (Chaetosphaeridium globosum (Charophycean green alga)).